The following is a 146-amino-acid chain: Ribonuclease H (146 aa).

The RNase H type-1 domain occupies 1 to 143 (MRKKIIIYTD…CDYLARQAIK (143 aa)). Positions 10, 48, 70, and 135 each coordinate Mg(2+).

It belongs to the RNase H family. As to quaternary structure, monomer. It depends on Mg(2+) as a cofactor.

The protein localises to the cytoplasm. The enzyme catalyses Endonucleolytic cleavage to 5'-phosphomonoester.. In terms of biological role, endonuclease that specifically degrades the RNA of RNA-DNA hybrids. This Prosthecochloris aestuarii (strain DSM 271 / SK 413) protein is Ribonuclease H.